A 170-amino-acid polypeptide reads, in one-letter code: Type II secretion system protein H (170 aa).

The propeptide at 1 to 5 (MRQRG) is leader sequence. F6 is modified (N-methylphenylalanine). A helical membrane pass occupies residues 6–29 (FTLLEMMLILLLMGVSAGMVLLAF).

Belongs to the GSP H family. In terms of assembly, type II secretion is composed of four main components: the outer membrane complex, the inner membrane complex, the cytoplasmic secretion ATPase and the periplasm-spanning pseudopilus. Interacts with core component PulG. Cleaved by prepilin peptidase. In terms of processing, methylated by prepilin peptidase at the amino group of the N-terminal phenylalanine once the leader sequence is cleaved by prepilin peptidase.

Its subcellular location is the cell inner membrane. In terms of biological role, component of the type II secretion system required for the energy-dependent secretion of extracellular factors such as proteases and toxins from the periplasm. Part of the pseudopilus tip complex that is critical for the recognition and binding of secretion substrates. This chain is Type II secretion system protein H (pulH), found in Klebsiella pneumoniae.